A 520-amino-acid polypeptide reads, in one-letter code: T-box transcription factor TBX22 (520 aa).

The interval 1–91 (MALSSRARAF…NSSESLEEKD (91 aa)) is disordered. Residues 33 to 49 (PELREKKGGEEEEERRS) show a composition bias toward basic and acidic residues. Over residues 67 to 84 (STSASSGCGSDSGYGNSS) the composition is skewed to low complexity. The segment at residues 96–283 (LQGSELWKRF…RNPFAKGFRD (188 aa)) is a DNA-binding region (T-box).

As to expression, seems to be expressed at a low level.

The protein localises to the nucleus. Probable transcriptional regulator involved in developmental processes. This is major determinant crucial to palatogenesis. The protein is T-box transcription factor TBX22 (TBX22) of Homo sapiens (Human).